Consider the following 157-residue polypeptide: Protein PEROXIN-4 (157 aa).

The region spanning 3-153 is the UBC core domain; that stretch reads ASRARLFKEY…AQMYTRLAAM (151 aa). Cys-90 (glycyl thioester intermediate) is an active-site residue.

The protein belongs to the ubiquitin-conjugating enzyme family. Interacts with PEX22.

The protein localises to the peroxisome membrane. It carries out the reaction S-ubiquitinyl-[E1 ubiquitin-activating enzyme]-L-cysteine + [E2 ubiquitin-conjugating enzyme]-L-cysteine = [E1 ubiquitin-activating enzyme]-L-cysteine + S-ubiquitinyl-[E2 ubiquitin-conjugating enzyme]-L-cysteine.. The protein operates within protein modification; protein ubiquitination. Its function is as follows. Required for peroxisome biogenesis. Necessary for the developmental elimination of obsolete peroxisome matrix proteins. May be involved in the ubiquitination of PEX5, targeting it for recycling. Accepts the ubiquitin from the E1 complex and catalyzes its covalent attachment to other proteins. The chain is Protein PEROXIN-4 (PEX4) from Arabidopsis thaliana (Mouse-ear cress).